The primary structure comprises 210 residues: Frataxin, mitochondrial (210 aa).

Residues 1–41 (MWTLGRRAVAGLLASPSPAQAQTLTRVPRPAELAPLCGRRG) constitute a mitochondrion transit peptide.

It belongs to the frataxin family. Component of the mitochondrial core iron-sulfur cluster (ISC) complex composed of NFS1, LYRM4, NDUFAB1, ISCU, FXN, and FDX2; this complex is a heterohexamer containing two copies of each monomer. Homodimer. Monomer (probable predominant form). Oligomer. Monomers and polymeric aggregates of &gt;1 MDa have been isolated from mitochondria. A small fraction of heterologous overexpressed recombinant frataxin forms high-molecular weight aggregates that incorporate iron. Interacts with LYRM4. Interacts (via ferrous form) with ISCU; the interaction is possible when both are bound to the dimeric form of the cysteine desulfurase complex (NFS1:LYRM4) and the interaction enhances FXN interaction to the dimeric form of the cysteine desulfurase complex (NFS1:LYRM4). Interacts with FECH; one iron-bound FXN monomer seems to interact with a FECH homodimer. Interacts with SDHA and SDHB. Interacts with ACO2; the interaction is dependent on citrate. Interacts with HSPA9. In terms of assembly, interacts with ACO1. Interacts with ISCU (cytoplasmic form). Post-translationally, processed in two steps by mitochondrial processing peptidase (MPP). MPP first cleaves the precursor to intermediate form and subsequently converts the intermediate to yield frataxin mature form (frataxin(81-210)) which is the predominant form. The additional forms, frataxin(56-210) and frataxin(78-210), seem to be produced when the normal maturation process is impaired; their physiological relevance is unsure. Expressed in the heart, peripheral blood lymphocytes and dermal fibroblasts.

The protein resides in the mitochondrion. It is found in the cytoplasm. Its subcellular location is the cytosol. The enzyme catalyses 4 Fe(2+) + O2 + 4 H(+) = 4 Fe(3+) + 2 H2O. Functionally, functions as an activator of persulfide transfer to the scaffoding protein ISCU as component of the core iron-sulfur cluster (ISC) assembly complex and participates to the [2Fe-2S] cluster assembly. Accelerates sulfur transfer from NFS1 persulfide intermediate to ISCU and to small thiols such as L-cysteine and glutathione leading to persulfuration of these thiols and ultimately sulfide release. Binds ferrous ion and is released from FXN upon the addition of both L-cysteine and reduced FDX2 during [2Fe-2S] cluster assembly. The core iron-sulfur cluster (ISC) assembly complex is involved in the de novo synthesis of a [2Fe-2S] cluster, the first step of the mitochondrial iron-sulfur protein biogenesis. This process is initiated by the cysteine desulfurase complex (NFS1:LYRM4:NDUFAB1) that produces persulfide which is delivered on the scaffold protein ISCU in a FXN-dependent manner. Then this complex is stabilized by FDX2 which provides reducing equivalents to accomplish the [2Fe-2S] cluster assembly. Finally, the [2Fe-2S] cluster is transferred from ISCU to chaperone proteins, including HSCB, HSPA9 and GLRX5. May play a role in the protection against iron-catalyzed oxidative stress through its ability to catalyze the oxidation of Fe(2+) to Fe(3+); the oligomeric form but not the monomeric form has in vitro ferroxidase activity. May be able to store large amounts of iron in the form of a ferrihydrite mineral by oligomerization; however, the physiological relevance is unsure as reports are conflicting and the function has only been shown using heterologous overexpression systems. May function as an iron chaperone protein that protects the aconitase [4Fe-4S]2+ cluster from disassembly and promotes enzyme reactivation. May play a role as a high affinity iron binding partner for FECH that is capable of both delivering iron to ferrochelatase and mediating the terminal step in mitochondrial heme biosynthesis. In terms of biological role, modulates the RNA-binding activity of ACO1. May be involved in the cytoplasmic iron-sulfur protein biogenesis. May contribute to oxidative stress resistance and overall cell survival. This chain is Frataxin, mitochondrial, found in Homo sapiens (Human).